The chain runs to 86 residues: Small ribosomal subunit protein bS20 (86 aa).

It belongs to the bacterial ribosomal protein bS20 family.

In terms of biological role, binds directly to 16S ribosomal RNA. The polypeptide is Small ribosomal subunit protein bS20 (Pseudarthrobacter chlorophenolicus (strain ATCC 700700 / DSM 12829 / CIP 107037 / JCM 12360 / KCTC 9906 / NCIMB 13794 / A6) (Arthrobacter chlorophenolicus)).